Reading from the N-terminus, the 1615-residue chain is Ferredoxin-dependent glutamate synthase, chloroplastic (1615 aa).

The N-terminal 52 residues, 1–52, are a transit peptide targeting the chloroplast; the sequence is MATLPRAAAAAAPSPAAALLPLPRAAPLLAGRAAARSAARRLRARGTRAPPL. Residue C97 is the Nucleophile of the active site. The region spanning 97 to 496 is the Glutamine amidotransferase type-2 domain; it reads CGVGFVANLK…PGMMITVDLQ (400 aa). Residue 1175 to 1232 participates in FMN binding; the sequence is LSETHQTLIQNGLRERVVLRVDGGFRSGLDVLMAAAMGADEYGFGSVAMIATGCVMAR. Residues C1228, C1234, and C1239 each coordinate [3Fe-4S] cluster.

Belongs to the glutamate synthase family. [3Fe-4S] cluster serves as cofactor. FAD is required as a cofactor. Requires FMN as cofactor. As to expression, expressed in leaf blades and at lower levels in roots.

It is found in the plastid. The protein localises to the chloroplast. The enzyme catalyses 2 oxidized [2Fe-2S]-[ferredoxin] + 2 L-glutamate = L-glutamine + 2 reduced [2Fe-2S]-[ferredoxin] + 2-oxoglutarate + 2 H(+). The protein operates within amino-acid biosynthesis; L-glutamate biosynthesis via GLT pathway; L-glutamate from 2-oxoglutarate and L-glutamine (ferredoxin route): step 1/1. It participates in energy metabolism; nitrogen metabolism. In terms of biological role, involved in glutamate biosynthesis in leaf. Required for the reassimilation of ammonium ions generated during photorespiration. This is Ferredoxin-dependent glutamate synthase, chloroplastic (GLU) from Oryza sativa subsp. japonica (Rice).